The primary structure comprises 108 residues: Cell cycle protein GpsB (108 aa).

The stretch at 32–69 (LDNVIKDYENFNAQIEALKAENEALKKAKYQARNTVSA) forms a coiled coil.

The protein belongs to the GpsB family. Forms polymers through the coiled coil domains. Interacts with PBP1, MreC and EzrA.

It is found in the cytoplasm. In terms of biological role, divisome component that associates with the complex late in its assembly, after the Z-ring is formed, and is dependent on DivIC and PBP2B for its recruitment to the divisome. Together with EzrA, is a key component of the system that regulates PBP1 localization during cell cycle progression. Its main role could be the removal of PBP1 from the cell pole after pole maturation is completed. Also contributes to the recruitment of PBP1 to the division complex. Not essential for septum formation. This chain is Cell cycle protein GpsB, found in Streptococcus pyogenes serotype M49 (strain NZ131).